The following is a 125-amino-acid chain: uncharacterized protein (125 aa).

This is an uncharacterized protein from Caenorhabditis elegans.